The primary structure comprises 215 residues: Osteoclast-stimulating factor 1 (215 aa).

An N-acetylserine modification is found at Ser2. Positions 12 to 71 (GQVKVFRALYTFEPRTPDELYFEEGDIIYITDMSDTSWWKGTCKGRTGLIPSNYVAEQAE) constitute an SH3 domain. 3 ANK repeats span residues 72 to 101 (SIDN…GVNG), 105 to 135 (AGST…ELNQ), and 139 to 168 (LGDT…RTDL). The disordered stretch occupies residues 192–215 (KQQGTDGARTLSNAEDYLDDEDSD). Residue Thr201 is modified to Phosphothreonine. Residues Ser203 and Ser214 each carry the phosphoserine modification.

In terms of assembly, interacts with C-SRC and SMN1. Interacts with FASLG.

Its subcellular location is the cytoplasm. Its function is as follows. Induces bone resorption, acting probably through a signaling cascade which results in the secretion of factor(s) enhancing osteoclast formation and activity. The sequence is that of Osteoclast-stimulating factor 1 (Ostf1) from Mus musculus (Mouse).